We begin with the raw amino-acid sequence, 236 residues long: Glycosylphosphatidylinositol anchor biosynthesis protein 11 (236 aa).

2 helical membrane-spanning segments follow: residues 40–60 (TLTI…FGLT) and 65–85 (GVML…GYLI). Asn99 is a glycosylation site (N-linked (GlcNAc...) asparagine). A run of 4 helical transmembrane segments spans residues 107–127 (LLAG…VALI), 139–159 (ETYL…LVLY), 184–204 (ILLS…PIPL), and 215–235 (ITLL…CFLF).

The protein belongs to the PIGF family.

Its subcellular location is the endoplasmic reticulum membrane. Its pathway is glycolipid biosynthesis; glycosylphosphatidylinositol-anchor biosynthesis. Acts in the GPI biosynthetic pathway between GlcNAc-PI synthesis and GPI transfer to protein. This Debaryomyces hansenii (strain ATCC 36239 / CBS 767 / BCRC 21394 / JCM 1990 / NBRC 0083 / IGC 2968) (Yeast) protein is Glycosylphosphatidylinositol anchor biosynthesis protein 11 (GPI11).